A 316-amino-acid chain; its full sequence is Pantothenate kinase (316 aa).

Residue 95 to 102 (GSVAVGKS) participates in ATP binding.

This sequence belongs to the prokaryotic pantothenate kinase family.

The protein localises to the cytoplasm. The catalysed reaction is (R)-pantothenate + ATP = (R)-4'-phosphopantothenate + ADP + H(+). Its pathway is cofactor biosynthesis; coenzyme A biosynthesis; CoA from (R)-pantothenate: step 1/5. The sequence is that of Pantothenate kinase from Yersinia pseudotuberculosis serotype O:3 (strain YPIII).